The following is a 210-amino-acid chain: 3-hydroxy-3-methylglutaryl-coenzyme A reductase 2 (210 aa).

Residues K21 and D97 each act as charge relay system in the active site. Residues 166–186 form a helical membrane-spanning segment; the sequence is LLATIVAGSVLAGELSLMSAI. The active-site Proton donor is H195. N199 carries N-linked (GlcNAc...) asparagine glycosylation.

Belongs to the HMG-CoA reductase family.

The protein resides in the endoplasmic reticulum membrane. It is found in the mitochondrion membrane. Its subcellular location is the plastid membrane. The catalysed reaction is (R)-mevalonate + 2 NADP(+) + CoA = (3S)-3-hydroxy-3-methylglutaryl-CoA + 2 NADPH + 2 H(+). Its pathway is metabolic intermediate biosynthesis; (R)-mevalonate biosynthesis; (R)-mevalonate from acetyl-CoA: step 3/3. Its function is as follows. Catalyzes the synthesis of mevalonate. The specific precursor of all isoprenoid compounds present in plants. The polypeptide is 3-hydroxy-3-methylglutaryl-coenzyme A reductase 2 (HMGR2) (Hevea brasiliensis (Para rubber tree)).